The following is a 155-amino-acid chain: Small ribosomal subunit protein uS7c (155 aa).

This sequence belongs to the universal ribosomal protein uS7 family. In terms of assembly, part of the 30S ribosomal subunit.

Its subcellular location is the plastid. It localises to the chloroplast. One of the primary rRNA binding proteins, it binds directly to 16S rRNA where it nucleates assembly of the head domain of the 30S subunit. The chain is Small ribosomal subunit protein uS7c (rps7) from Houttuynia cordata (Chameleon plant).